The chain runs to 307 residues: Pseudouridine-5'-phosphate glycosidase (307 aa).

Glu28 acts as the Proton donor in catalysis. Residues Lys89 and Val109 each contribute to the substrate site. Asp141 provides a ligand contact to Mn(2+). 143–145 (SAD) contributes to the substrate binding site. Lys162 serves as the catalytic Nucleophile.

It belongs to the pseudouridine-5'-phosphate glycosidase family. As to quaternary structure, homotrimer. Mn(2+) is required as a cofactor.

It catalyses the reaction D-ribose 5-phosphate + uracil = psi-UMP + H2O. Its function is as follows. Catalyzes the reversible cleavage of pseudouridine 5'-phosphate (PsiMP) to ribose 5-phosphate and uracil. Functions biologically in the cleavage direction, as part of a pseudouridine degradation pathway. The polypeptide is Pseudouridine-5'-phosphate glycosidase (Staphylococcus aureus (strain MW2)).